Consider the following 474-residue polypeptide: Aspartyl/glutamyl-tRNA(Asn/Gln) amidotransferase subunit B (474 aa).

This sequence belongs to the GatB/GatE family. GatB subfamily. As to quaternary structure, heterotrimer of A, B and C subunits.

The catalysed reaction is L-glutamyl-tRNA(Gln) + L-glutamine + ATP + H2O = L-glutaminyl-tRNA(Gln) + L-glutamate + ADP + phosphate + H(+). It carries out the reaction L-aspartyl-tRNA(Asn) + L-glutamine + ATP + H2O = L-asparaginyl-tRNA(Asn) + L-glutamate + ADP + phosphate + 2 H(+). Its function is as follows. Allows the formation of correctly charged Asn-tRNA(Asn) or Gln-tRNA(Gln) through the transamidation of misacylated Asp-tRNA(Asn) or Glu-tRNA(Gln) in organisms which lack either or both of asparaginyl-tRNA or glutaminyl-tRNA synthetases. The reaction takes place in the presence of glutamine and ATP through an activated phospho-Asp-tRNA(Asn) or phospho-Glu-tRNA(Gln). The chain is Aspartyl/glutamyl-tRNA(Asn/Gln) amidotransferase subunit B from Limosilactobacillus fermentum (strain NBRC 3956 / LMG 18251) (Lactobacillus fermentum).